A 216-amino-acid polypeptide reads, in one-letter code: Squamosa promoter-binding-like protein 13 (216 aa).

The disordered stretch occupies residues Gly32–Cys110. Low complexity predominate over residues Ser67 to Arg91. The span at Gly94 to Pro108 shows a compositional bias: gly residues. The SBP-type zinc finger occupies Gly107–Ser184. The Zn(2+) site is built by Cys110, Cys115, Cys132, His135, Cys151, Cys154, His158, and Cys170. Residues Lys167–Lys183 carry the Bipartite nuclear localization signal motif. The disordered stretch occupies residues Ala175–Arg216. Positions Ala189–Arg203 are enriched in basic and acidic residues. Polar residues predominate over residues His205–Arg216.

As to expression, ubiquitous.

It is found in the nucleus. In terms of biological role, trans-acting factor that binds specifically to the consensus nucleotide sequence 5'-TNCGTACAA-3'. May be involved in panicle development. This Oryza sativa subsp. japonica (Rice) protein is Squamosa promoter-binding-like protein 13 (SPL13).